The primary structure comprises 456 residues: Methylenetetrahydrofolate--tRNA-(uracil-5-)-methyltransferase TrmFO (456 aa).

An FAD-binding site is contributed by G11 to G16.

It belongs to the MnmG family. TrmFO subfamily. The cofactor is FAD.

Its subcellular location is the cytoplasm. The catalysed reaction is uridine(54) in tRNA + (6R)-5,10-methylene-5,6,7,8-tetrahydrofolate + NADH + H(+) = 5-methyluridine(54) in tRNA + (6S)-5,6,7,8-tetrahydrofolate + NAD(+). It carries out the reaction uridine(54) in tRNA + (6R)-5,10-methylene-5,6,7,8-tetrahydrofolate + NADPH + H(+) = 5-methyluridine(54) in tRNA + (6S)-5,6,7,8-tetrahydrofolate + NADP(+). Catalyzes the folate-dependent formation of 5-methyl-uridine at position 54 (M-5-U54) in all tRNAs. This Synechococcus sp. (strain CC9605) protein is Methylenetetrahydrofolate--tRNA-(uracil-5-)-methyltransferase TrmFO.